Consider the following 466-residue polypeptide: Ras-GEF domain-containing family member 1C (466 aa).

The span at 1-23 shows a compositional bias: polar residues; it reads MPQTLSASDMVTPGSLSPPTTEP. Disordered stretches follow at residues 1–35 and 443–466; these read MPQT…PLLD and SESP…LGKT. The N-terminal Ras-GEF domain occupies 34-164; it reads LDGAPSSASL…LLQALHQKLA (131 aa). One can recognise a Ras-GEF domain in the interval 200 to 446; it reads DPYTLAQQLT…YLASYESESP (247 aa).

Its function is as follows. Guanine nucleotide exchange factor (GEF). The chain is Ras-GEF domain-containing family member 1C (RASGEF1C) from Macaca fascicularis (Crab-eating macaque).